A 366-amino-acid polypeptide reads, in one-letter code: MTVTGIIAEFNPFHYGHQYLLSQARGLKIVAMSGNFVQRGEPALVDKWVRAQMALENGADLVVELPFLVSVQSADYFAQGAVDILMRLGIDTLAFGTEQLFDYQKLSRLYSEQAEHMTAYLAALPDHLSYPQKTQSMWEAFAGLSATGDRPNHLLALSYVKASAGKKLQLQPIKRLGAGFHSEAKDQCLSSATAIRKHIADRAFVEKSSPNAALILRAPQVTWEHYFPLLKYHILTSPDLTEFFQVNDELASRISAAIRSIATVDELVEAVATKHYTKARVRRVLTYILVKAVEAPLPEGIHVLGFSKKGQAHLKTIKASVPLISRIGAKPWDQLTQRADTVYQLGHMDMPEQTWGRVPIRPGAMN.

Residues 7–20, glycine 96, asparagine 152, and arginine 175 each bind ATP; that span reads IAEFNPFHYGHQYL.

Belongs to the TmcAL family.

The protein localises to the cytoplasm. The enzyme catalyses cytidine(34) in elongator tRNA(Met) + acetate + ATP = N(4)-acetylcytidine(34) in elongator tRNA(Met) + AMP + diphosphate. In terms of biological role, catalyzes the formation of N(4)-acetylcytidine (ac(4)C) at the wobble position of elongator tRNA(Met), using acetate and ATP as substrates. First activates an acetate ion to form acetyladenylate (Ac-AMP) and then transfers the acetyl group to tRNA to form ac(4)C34. This Streptococcus equi subsp. zooepidemicus (strain H70) protein is tRNA(Met) cytidine acetate ligase.